We begin with the raw amino-acid sequence, 864 residues long: Leucine--tRNA ligase (864 aa).

Positions 42 to 52 (PYPSGKLHMGH) match the 'HIGH' region motif. A 'KMSKS' region motif is present at residues 624–628 (KMSKS). Lys-627 lines the ATP pocket.

This sequence belongs to the class-I aminoacyl-tRNA synthetase family.

Its subcellular location is the cytoplasm. The catalysed reaction is tRNA(Leu) + L-leucine + ATP = L-leucyl-tRNA(Leu) + AMP + diphosphate. The protein is Leucine--tRNA ligase of Paraburkholderia phymatum (strain DSM 17167 / CIP 108236 / LMG 21445 / STM815) (Burkholderia phymatum).